A 152-amino-acid chain; its full sequence is MLLVAKKEITRIAKLELIGGQAKPGPALASVGINMGEFTKQFNEKTKDRMGDVVPVIITAFNDKSFLFELKTTPVTVLLKKAAKIESGAKNPKTEKVGKISKAEALKIAEYKMADLNAYDTEAALRMIAGTAKQMGLEIEGVDPVTKSKKGS.

It belongs to the universal ribosomal protein uL11 family. As to quaternary structure, part of the ribosomal stalk of the 50S ribosomal subunit. Interacts with L10 and the large rRNA to form the base of the stalk. L10 forms an elongated spine to which L12 dimers bind in a sequential fashion forming a multimeric L10(L12)X complex. One or more lysine residues are methylated.

In terms of biological role, forms part of the ribosomal stalk which helps the ribosome interact with GTP-bound translation factors. The chain is Large ribosomal subunit protein uL11 from Mycoplasmoides gallisepticum (strain R(low / passage 15 / clone 2)) (Mycoplasma gallisepticum).